The following is an 837-amino-acid chain: AdoMet-dependent rRNA methyltransferase SPB1 (837 aa).

S-adenosyl-L-methionine-binding residues include Gly58, Trp60, Asp78, Asp94, and Asp119. Lys159 functions as the Proton acceptor in the catalytic mechanism. Positions 345–390 form a coiled coil; that stretch reads LNEEEQIEKELRDLQEKQKQKQKREKRRKNEEKQKELTRMQMNMLT. Disordered regions lie at residues 359–381, 483–529, 573–644, and 779–808; these read QEKQKQKQKREKRRKNEEKQKEL, FRAK…DEDD, TDDV…TTKE, and TKKQKTKPKVTLVVAHGKNKGLSGRPKGIK. The segment covering 372–381 has biased composition (basic and acidic residues); that stretch reads RKNEEKQKEL. Residues 518 to 529 show a composition bias toward acidic residues; it reads ESDDSELSDEDD. A compositionally biased stretch (basic and acidic residues) spans 593-602; sequence SYNEMKKEDL. Acidic residues predominate over residues 603-635; sequence SDSSDEDSSSESDFEIVANDESDGDIDSDYDSD.

This sequence belongs to the class I-like SAM-binding methyltransferase superfamily. RNA methyltransferase RlmE family. SPB1 subfamily. Component of the nucleolar and nucleoplasmic pre-60S ribosomal particle.

The protein resides in the nucleus. It localises to the nucleolus. It catalyses the reaction a ribonucleotide in rRNA + S-adenosyl-L-methionine = a 2'-O-methylribonucleotide in rRNA + S-adenosyl-L-homocysteine + H(+). In terms of biological role, required for proper assembly of pre-ribosomal particles during the biogenesis of the 60S ribosomal subunit. The protein is AdoMet-dependent rRNA methyltransferase SPB1 of Candida glabrata (strain ATCC 2001 / BCRC 20586 / JCM 3761 / NBRC 0622 / NRRL Y-65 / CBS 138) (Yeast).